The primary structure comprises 864 residues: Leucine--tRNA ligase (864 aa).

Residues 42–52 (PYPSGKLHMGH) carry the 'HIGH' region motif. A 'KMSKS' region motif is present at residues 624 to 628 (KMSKS). Position 627 (Lys627) interacts with ATP.

It belongs to the class-I aminoacyl-tRNA synthetase family.

The protein localises to the cytoplasm. It carries out the reaction tRNA(Leu) + L-leucine + ATP = L-leucyl-tRNA(Leu) + AMP + diphosphate. The chain is Leucine--tRNA ligase from Paraburkholderia phymatum (strain DSM 17167 / CIP 108236 / LMG 21445 / STM815) (Burkholderia phymatum).